The chain runs to 614 residues: Deoxynucleoside triphosphate triphosphohydrolase SAMHD1 (614 aa).

The segment covering 1 to 13 has biased composition (low complexity); sequence MGSPAAGWGAAPA. Residues 1 to 33 form a disordered region; sequence MGSPAAGWGAAPAKRARREGSAESSCGSPADRD. Residues 37–102 enclose the SAM domain; that stretch reads WDTERLCQHL…LACLNQLRQT (66 aa). The GTP site is built by Lys107 and Val108. Residue Asn110 participates in dGTP binding. GTP-binding residues include Asp128, Gln133, and Arg136. Positions 140, 141, 147, and 155 each coordinate dGTP. Gln140 contacts dATP. DCTP is bound at residue Gln140. DTTP is bound at residue Gln140. Residue Arg155 participates in dATP binding. Position 155 (Arg155) interacts with dCTP. Arg155 serves as a coordination point for dTTP. Residues 155-307 enclose the HD domain; the sequence is RFEHSLGVGY…GIDVDKWDYF (153 aa). Residues His158, His197, and Asp198 each contribute to the Mn(2+) site. Positions 201 and 206 each coordinate dATP. Residues His201 and His206 each coordinate dCTP. 2 residues coordinate dTTP: His201 and His206. The active site involves His224. Asp302 contributes to the Mn(2+) binding site. Residues Lys303, Tyr306, Asp310, Arg324, Arg343, Lys345, Asn349, Arg357, Tyr365, Gln366, His367, and Lys368 each coordinate dGTP. Lys303, Tyr306, and Asp310 together coordinate dATP. Lys303, Tyr306, and Asp310 together coordinate dCTP. Lys303, Tyr306, and Asp310 together coordinate dTTP. Arg357 contacts dATP. A dCTP-binding site is contributed by Arg357. Gln366 is a dATP binding site. A dCTP-binding site is contributed by Gln366. Position 366 (Gln366) interacts with dTTP. GTP contacts are provided by Arg442, Lys446, and Lys515. A dGTP-binding site is contributed by Lys515.

Belongs to the SAMHD1 family. As to quaternary structure, homodimer; in absence of GTP and dNTP. Homotetramer; in GTP- and dNTP-bound form. Interacts with rbbp8/CtIP. It depends on Zn(2+) as a cofactor.

The protein localises to the nucleus. Its subcellular location is the chromosome. It carries out the reaction a 2'-deoxyribonucleoside 5'-triphosphate + H2O = a 2'-deoxyribonucleoside + triphosphate + H(+). The catalysed reaction is dATP + H2O = 2'-deoxyadenosine + triphosphate + H(+). The enzyme catalyses dCTP + H2O = 2'-deoxycytidine + triphosphate + H(+). It catalyses the reaction dGTP + H2O = 2'-deoxyguanosine + triphosphate + H(+). It carries out the reaction dTTP + H2O = thymidine + triphosphate + H(+). Allosterically activated and regulated via the combined actions of GTP and dNTPs (dATP, dGTP, dTTP and dCTP): Allosteric site 1 binds GTP, while allosteric site 2 binds dNTP. Allosteric activation promotes the formation of highly active homotetramers. Protein that acts both as a host restriction factor involved in defense response to virus and as a regulator of DNA end resection at stalled replication forks. Has deoxynucleoside triphosphate (dNTPase) activity, which is required to restrict infection by viruses: dNTPase activity reduces cellular dNTP levels to levels too low for retroviral reverse transcription to occur, blocking early-stage virus replication in dendritic and other myeloid cells. Functions during S phase at stalled DNA replication forks to promote the resection of gapped or reversed forks: acts by stimulating the exonuclease activity of MRE11, activating the ATR-CHK1 pathway and allowing the forks to restart replication. Its ability to promote degradation of nascent DNA at stalled replication forks is required to prevent induction of type I interferons, thereby preventing chronic inflammation. Ability to promote DNA end resection at stalled replication forks is independent of dNTPase activity. The polypeptide is Deoxynucleoside triphosphate triphosphohydrolase SAMHD1 (Gallus gallus (Chicken)).